The following is a 1487-amino-acid chain: Major viral transcription factor (1487 aa).

Disordered regions lie at residues 41–295, 310–371, 409–442, and 803–1007; these read AAPD…LPPG, LAKT…EEAP, REPL…SRDG, and PPTR…HTPR. Positions 66-75 are enriched in pro residues; sequence VIPPPSPAPE. 2 stretches are compositionally biased toward low complexity: residues 165 to 193 and 201 to 213; these read PSSA…SSSS and DGAG…SSSS. Residues 214–224 show a composition bias toward acidic residues; sequence DDSDSDEGGEE. Low complexity predominate over residues 235–272; sequence AAKTPSAAGSPGPSSGGDRPAAGAATPKSCRSGAASPG. Pro residues predominate over residues 273–285; it reads APAPAPASAPAPS. Composition is skewed to low complexity over residues 807–829, 849–860, and 867–877; these read SQQP…AEGS, PSSHSQSPQHSQ, and ATTATCCRATQ. The segment covering 878-893 has biased composition (polar residues); that stretch reads TNARSRGQQHQPQKAR. Positions 920-929 are enriched in basic residues; the sequence is HGRPRGKSGK. The span at 938–951 shows a compositional bias: low complexity; sequence AAQAGASASFSSSA. Basic and acidic residues predominate over residues 988 to 1007; it reads GPDRRGGFRRVPRGDCHTPR.

It belongs to the herpesviridae ICP4 family. Post-translationally, a long stretch of serine residues may be a major site of phosphorylation.

The protein localises to the host nucleus. Its function is as follows. This IE protein is a multifunctional protein capable of migrating to the nucleus, binding to DNA, trans-activating other viral genes, and autoregulating its own synthesis. This is Major viral transcription factor (IE) from Equine herpesvirus 1 (strain Kentucky A) (EHV-1).